A 317-amino-acid polypeptide reads, in one-letter code: Olfactory receptor 5K17 (317 aa).

At 1–28 the chain is on the extracellular side; it reads MMKANHSLTVEFILIGFSDHTDLKTLLF. An N-linked (GlcNAc...) asparagine glycan is attached at asparagine 5. A helical membrane pass occupies residues 29-49; the sequence is LLFSAIYLVTIVGNLGLVALI. The Cytoplasmic portion of the chain corresponds to 50 to 56; sequence YMEPRLH. A helical membrane pass occupies residues 57–77; that stretch reads TPMYIFLGNLALMDSCCSCAI. Residues 78 to 93 are Extracellular-facing; the sequence is TPKMLENFFSVDRRIS. The helical transmembrane segment at 94–114 threads the bilayer; that stretch reads LYECMVQFYFLCLAETADCFL. A disulfide bridge links cysteine 97 with cysteine 189. Topologically, residues 115–144 are cytoplasmic; the sequence is LAAMAYDRYVAICNPLQYHTMMSKKLSIQM. Residues 145–165 form a helical membrane-spanning segment; sequence SIGTFIASNLHSLIHTGCLLR. The Extracellular segment spans residues 166 to 198; it reads LNFCKSRRIDHFFCDILPLYKLSCTDPFINELM. A helical transmembrane segment spans residues 199–219; it reads LYIFSMPIQVFTITTVLVSYS. Residues 220–239 lie on the Cytoplasmic side of the membrane; that stretch reads CILLTVFKMKSKDGRGKAFS. A helical membrane pass occupies residues 240–259; that stretch reads TCASHFFSVSIFYICLLMYI. Over 260-268 the chain is Extracellular; the sequence is GPSKNSNKD. Residues 269–289 form a helical membrane-spanning segment; the sequence is IPVGVFYTIVIPLLNPFIYSL. At 290 to 317 the chain is on the cytoplasmic side; sequence RNKEVVNAVKKVMKTHSIFKNSSASIAH.

The protein belongs to the G-protein coupled receptor 1 family.

It is found in the cell membrane. Potential odorant receptor. This is Olfactory receptor 5K17 from Mus musculus (Mouse).